Consider the following 552-residue polypeptide: Membrane protein insertase YidC (552 aa).

5 helical membrane-spanning segments follow: residues 7-24 (VLWV…DNWQ), 364-384 (WGWA…PLSA), 434-454 (LPVV…LASV), 473-493 (PFFI…SLNP), and 508-528 (PIAF…YYVV).

Belongs to the OXA1/ALB3/YidC family. Type 1 subfamily. Interacts with the Sec translocase complex via SecD. Specifically interacts with transmembrane segments of nascent integral membrane proteins during membrane integration.

It localises to the cell inner membrane. Its function is as follows. Required for the insertion and/or proper folding and/or complex formation of integral membrane proteins into the membrane. Involved in integration of membrane proteins that insert both dependently and independently of the Sec translocase complex, as well as at least some lipoproteins. Aids folding of multispanning membrane proteins. The chain is Membrane protein insertase YidC from Burkholderia cenocepacia (strain ATCC BAA-245 / DSM 16553 / LMG 16656 / NCTC 13227 / J2315 / CF5610) (Burkholderia cepacia (strain J2315)).